A 1155-amino-acid polypeptide reads, in one-letter code: MAASRIASANALGPNRVSFARIKEPLEVPNLLALQTESFDWLLGNERWRARVEAARKAGRKDIPEQSGLEEIFEEISPIEDFSGTMSLSFRDHRFEPPKYSEEECKDKDMTYSAPMFVTAEFINNDTGEIKSQTVFMGDFPLMTAKGTFIINGTERVVVSQLVRSPGVYFDSQMDKSSDKELYGCKIIPSRGAWLEFEIDKRDFVGVRIDRKRKQAVTILLKALGWTTDQILERFGEYESIRATLEKDPTAGTDDALLDIYRKLRPGEPPTKEAAQALLENLYFNPKRYDLAKVGRYKINKKLGLEIDITQGTLTEEDIVATVDYLVRLHAGEKELVRPHGTFPIEVDDIDHFGNRRLRTVGELIQNQVRLGLARMERVVRERMTTQDVEAITPQTLINIRPVVASIREFFGTSQLSQFMDQTNPLAGLTHKRRLSALGPGGLSRERAGFEVRDVHPSHYGRMCPIETPEGPNIGLIGSLAAYARVNSFGFIETPYRKVVDGRITDEVVYLTADEEDRYVIAQANTPVNPDGTFAESQVLARRKGGEFESVAAEEVHYMDISPRQMVSVATAMIPFLEHDDANRALMGSNMQRQAVPLLRAEAPLVGTGMEYRAATDAGDVILAEKSGVVEDVTADYITVLADDGTRKTYRVHKFRRTNQGTCFNQRPIVEEGQRVEEGQVLADGPSTEAGEMALGKNLLVAYMSWEGHNYEDAIVLSQRLVEEDILSSIHIEEHEVDARETKLGPEEITREIPNVSEEVLADLDERGIIRIGAEVVDGDILVGKVTPKGETELTPEERLLRAIFGEKAREVRDTSLKVPHGESGKVIGVRVFSREEGDELPPGVNELVRVYVAQKRKITDGDKLAGRHGNKGVIAKILPKEDMPFLEDGTPVDIVLNPLGVPGRMNIGQIMEMHLGWLAKHGWKVEGDDAEWKRRLRDIGAHEAPPNSKVATPVFDGAREDEISGLLSCVLPDQDGDILVNKFGKAKLYDGRTGEPFKEPVAVGYAYFLKLHHLVDDKIHARSTGPYSMITQQPLGGKAQFGGQRFGEMEVWALEAYGAAYALQELLTIKSDDINGRVKVYEAIVKGENIPEPGIPESFKVLIKEMQSLCLNVEVLSRDGMSIEMRDSEEDVFRAAEELGIDLGRREPSSVEEV.

The protein belongs to the RNA polymerase beta chain family. The RNAP catalytic core consists of 2 alpha, 1 beta, 1 beta' and 1 omega subunit. When a sigma factor is associated with the core the holoenzyme is formed, which can initiate transcription.

The catalysed reaction is RNA(n) + a ribonucleoside 5'-triphosphate = RNA(n+1) + diphosphate. In terms of biological role, DNA-dependent RNA polymerase catalyzes the transcription of DNA into RNA using the four ribonucleoside triphosphates as substrates. This chain is DNA-directed RNA polymerase subunit beta, found in Thermobifida fusca (strain YX).